A 1358-amino-acid polypeptide reads, in one-letter code: Regulatory protein SIR4 (1358 aa).

Residues 1–15 show a composition bias toward polar residues; sequence MPNDNKTPNRSSTPK. Disordered stretches follow at residues 1–98, 252–277, 356–466, 498–544, 677–726, 752–787, and 913–970; these read MPND…PHSN, SLSV…SPGI, HDEK…PPEI, VQGE…ISNG, ASTE…EDEQ, VSDS…DLDT, and HSQE…ENLS. The segment covering 26–39 has biased composition (basic and acidic residues); sequence KIPEREEKSNEVKT. Polar residues-rich tracts occupy residues 49 to 66 and 75 to 96; these read KSKN…SPHQ and HKQL…SFPH. A compositionally biased stretch (basic and acidic residues) spans 373–388; the sequence is QKMKEDADLKRMEILK. Positions 428 to 437 are enriched in polar residues; that stretch reads QENNYNSTSR. The segment covering 452–464 has biased composition (basic and acidic residues); sequence KNGENKKIGKRPP. The segment covering 507 to 517 has biased composition (polar residues); that stretch reads RNNTLNVTPSK. Serine 692 carries the post-translational modification Phosphoserine. A compositionally biased stretch (polar residues) spans 706–720; sequence FPVSLSQPSKKSFAN. The segment covering 754-766 has biased composition (acidic residues); sequence DSDDSSSDNDSLT. Positions 777 to 787 are enriched in basic and acidic residues; it reads NEIKVTNDLDT. The span at 916–932 shows a compositional bias: polar residues; sequence EQNSSSAKPSQIPTVSS. A Glycyl lysine isopeptide (Lys-Gly) (interchain with G-Cter in SUMO) cross-link involves residue lysine 1128. Residues 1271 to 1347 adopt a coiled-coil conformation; the sequence is LSFVDIVLSK…DAKINKLMEK (77 aa).

Homodimer. Interacts with MPS3. Interacts with RIS1. Interacts with SIR1, SIR2 and SIR3. Interacts with YKU80. Interacts with UBP10. Interacts with RAP1 (via C-terminus).

The protein localises to the nucleus. In terms of biological role, the proteins SIR1 through SIR4 are required for transcriptional repression of the silent mating type loci, HML and HMR. The proteins SIR2 through SIR4 repress mulitple loci by modulating chromatin structure. Involves the compaction of chromatin fiber into a more condensed form. In Saccharomyces cerevisiae (strain ATCC 204508 / S288c) (Baker's yeast), this protein is Regulatory protein SIR4 (SIR4).